A 172-amino-acid polypeptide reads, in one-letter code: 3-hydroxydecanoyl-[acyl-carrier-protein] dehydratase (172 aa).

His71 is an active-site residue.

The protein belongs to the thioester dehydratase family. FabA subfamily. In terms of assembly, homodimer.

The protein localises to the cytoplasm. The catalysed reaction is a (3R)-hydroxyacyl-[ACP] = a (2E)-enoyl-[ACP] + H2O. It carries out the reaction (3R)-hydroxydecanoyl-[ACP] = (2E)-decenoyl-[ACP] + H2O. The enzyme catalyses (2E)-decenoyl-[ACP] = (3Z)-decenoyl-[ACP]. It participates in lipid metabolism; fatty acid biosynthesis. In terms of biological role, necessary for the introduction of cis unsaturation into fatty acids. Catalyzes the dehydration of (3R)-3-hydroxydecanoyl-ACP to E-(2)-decenoyl-ACP and then its isomerization to Z-(3)-decenoyl-ACP. Can catalyze the dehydratase reaction for beta-hydroxyacyl-ACPs with saturated chain lengths up to 16:0, being most active on intermediate chain length. The protein is 3-hydroxydecanoyl-[acyl-carrier-protein] dehydratase of Blochmanniella floridana.